Consider the following 764-residue polypeptide: Transient receptor potential cation channel subfamily V member 2 (764 aa).

Residues 1–46 form a disordered region; it reads MTSPSSSPVFRLETLDGGQEDGSEADRGKLDFGSGLPPMESQFQGE. Residues 1 to 388 are required for interaction with SLC50A1; the sequence is MTSPSSSPVF…LLQAKWDLLI (388 aa). Over 1 to 390 the chain is Cytoplasmic; the sequence is MTSPSSSPVF…QAKWDLLIPK (390 aa). Position 6 is a phosphoserine (S6). ANK repeat units follow at residues 72–114, 115–161, 162–207, 208–243, 244–292, and 293–319; these read NRFD…TEGS, TGKT…DDYY, RGHS…TCFY, FGEL…ATDS, QGNT…IRNL, and QDLT…REFS. The chain crosses the membrane as a helical span at residues 391–411; it reads FFLNFLCNLIYMFIFTAVAYH. At 412-434 the chain is on the extracellular side; sequence QPTLKKQAAPHLKAEVGNSMLLT. A helical transmembrane segment spans residues 435-455; the sequence is GHILILLGGIYLLVGQLWYFW. Residues 456–471 lie on the Cytoplasmic side of the membrane; the sequence is RRHVFIWISFIDSYFE. A helical transmembrane segment spans residues 472 to 492; sequence ILFLFQALLTVVSQVLCFLAI. Position 493 (E493) is a topological domain, extracellular. Residues 494-514 traverse the membrane as a helical segment; sequence WYLPLLVSALVLGWLNLLYYT. The Cytoplasmic segment spans residues 515–537; sequence RGFQHTGIYSVMIQKVILRDLLR. A helical membrane pass occupies residues 538–558; that stretch reads FLLIYLVFLFGFAVALVSLSQ. Residues 562–585 are disordered; the sequence is RPEAPTGPNATESVQPMEGQEDEG. N-linked (GlcNAc...) asparagine glycosylation occurs at N570. Residues 572–609 constitute an intramembrane region (pore-forming); that stretch reads TESVQPMEGQEDEGNGAQYRGILEASLELFKFTIGMGE. Residues 622-642 traverse the membrane as a helical segment; sequence VLLLLLAYVLLTYILLLNMLI. Residues 643–764 lie on the Cytoplasmic side of the membrane; it reads ALMSETVNSV…YVPVQLLQSN (122 aa). Residues 725–756 form a disordered region; that stretch reads PSGAGVPRTLENPVLASPPKEDEDGASEENYV. Residues S751 and S763 each carry the phosphoserine modification.

It belongs to the transient receptor (TC 1.A.4) family. TrpV subfamily. TRPV2 sub-subfamily. Homotetramer. Interacts with a cAMP-dependent protein kinase type II regulatory subunit (PRKAR2A or PRKAR2B) and ACBD3. Interacts with SLC50A1; the interaction probably occurs intracellularly and depends on TRPV2 N-glycosylation. Post-translationally, N-glycosylated. In terms of processing, phosphorylated by PKA.

The protein localises to the cell membrane. It is found in the cytoplasm. It localises to the melanosome. The catalysed reaction is Ca(2+)(in) = Ca(2+)(out). It catalyses the reaction Mg(2+)(in) = Mg(2+)(out). It carries out the reaction Na(+)(in) = Na(+)(out). The enzyme catalyses K(+)(in) = K(+)(out). Its function is as follows. Calcium-permeable, non-selective cation channel with an outward rectification. Seems to be regulated, at least in part, by IGF1, PDGF and neuropeptide head activator. May transduce physical stimuli in mast cells. Activated by temperatures higher than 52 degrees Celsius; is not activated by vanilloids and acidic pH. This Homo sapiens (Human) protein is Transient receptor potential cation channel subfamily V member 2 (TRPV2).